We begin with the raw amino-acid sequence, 263 residues long: Type-2Ba cytolytic delta-endotoxin (263 aa).

The protein belongs to the cyt1/cyt2 endotoxin family. Post-translationally, active after proteolytic processing.

In terms of biological role, kills the larvae of dipteran insects by making pores in the epithelial cell membrane of the insect midgut. The chain is Type-2Ba cytolytic delta-endotoxin (cyt2Ba1) from Bacillus thuringiensis subsp. israelensis.